Here is a 742-residue protein sequence, read N- to C-terminus: MSDEDSMLLNFTTNEDTAGSSYKQAAKVTGGRWKDRRRMKMKLEGKTVSRKRKANTTGDEGIIPGRGENSIKKLHKESSYSSEEQEKYKGRNAHNTQGRTLPADSQFVSSLFTSNREITTAVNTNIHDENVAINPSNAPLKGDQFASLGVTSLLVSHLEQKMRIKKPTSIQKQAIPQIIGNAGKNDFFIHAQTGSGKTLSYLLPIISTILNMDTHVDRTSGAFALVIAPTRELASQIYHVCSTLVSCCHYLVPCLLIGGERKKSEKARLRKGCNFIIGTPGRVLDHLQNTKVIKEQLSQSLRYIVLDEGDKLMELGFDETISEIIKIVHDIPINSEKFPKLPHKLVHMLCSATLTDGVNRLRNVALKDYKLISNGTKKDSDIVTVAPDQLLQRITIVPPKLRLVTLAATLNNITKDFIASGQQSKTLRTIVFVSCSDSVEFHYDAFSGSDGHHKNLTGDSVRLLTKGNTMFPCFSDSRDPDVVIYKLHGSLSQQMRTSTLQHFARDNEATKGKHLIMFCTDVASRGLDLPHVGSVIELDPPFAVEDHLHRVGRTARAGEKGESLLFLLPGEEEKYMDYIQPYHPMGWELLKFDKEILMPAFKDVNVNRNDKFIRKDEKSSKNKDVGDKEYEWDTNATTWHLNIERRVVGDSAFKNLAVKGFISHVRAYATHISQEKKFFNVKFLHLGHLAKSFGLRERPKAMGLQSSKDGNSEKKPTKENSKNKMFRMARMAEKQIASEFNY.

The tract at residues 45–100 (GKTVSRKRKANTTGDEGIIPGRGENSIKKLHKESSYSSEEQEKYKGRNAHNTQGRT) is disordered. The short motif at 143–172 (DQFASLGVTSLLVSHLEQKMRIKKPTSIQK) is the Q motif element. A Helicase ATP-binding domain is found at 178–372 (IIGNAGKNDF…NVALKDYKLI (195 aa)). 191 to 198 (AQTGSGKT) is a binding site for ATP. The DEAD box signature appears at 307–310 (DEGD). One can recognise a Helicase C-terminal domain in the interval 405–605 (TLAATLNNIT…ILMPAFKDVN (201 aa)). Positions 701-726 (AMGLQSSKDGNSEKKPTKENSKNKMF) are disordered. A compositionally biased stretch (basic and acidic residues) spans 710–722 (GNSEKKPTKENSK).

This sequence belongs to the DEAD box helicase family. DDX31/DBP7 subfamily.

It is found in the nucleus. Its subcellular location is the nucleolus. The catalysed reaction is ATP + H2O = ADP + phosphate + H(+). In terms of biological role, ATP-binding RNA helicase involved in the biogenesis of 60S ribosomal subunits and is required for the normal formation of 25S and 5.8S rRNAs. This is ATP-dependent RNA helicase DBP7 (DBP7) from Saccharomyces cerevisiae (strain YJM789) (Baker's yeast).